Consider the following 166-residue polypeptide: Ubiquitin-conjugating enzyme E2 7 (166 aa).

N-acetylalanine is present on A2. Residues 4–164 (QASLLLQKQL…VSRCVRKSQE (161 aa)) enclose the UBC core domain. C89 functions as the Glycyl thioester intermediate in the catalytic mechanism.

It belongs to the ubiquitin-conjugating enzyme family.

It carries out the reaction S-ubiquitinyl-[E1 ubiquitin-activating enzyme]-L-cysteine + [E2 ubiquitin-conjugating enzyme]-L-cysteine = [E1 ubiquitin-activating enzyme]-L-cysteine + S-ubiquitinyl-[E2 ubiquitin-conjugating enzyme]-L-cysteine.. The protein operates within protein modification; protein ubiquitination. Accepts the ubiquitin from the E1 complex and catalyzes its covalent attachment to other proteins. Involved in the formation of multiubiquitin chains. Signal the protein for selective degradation. The chain is Ubiquitin-conjugating enzyme E2 7 (UBC7) from Arabidopsis thaliana (Mouse-ear cress).